Reading from the N-terminus, the 1382-residue chain is Histone-lysine N-methyltransferase SUVR5 (1382 aa).

Disordered regions lie at residues 43 to 62 (TVTG…SEPK) and 354 to 373 (GNTN…NTPE). C2H2-type zinc fingers lie at residues 735-758 (FACA…EERH), 769-792 (LQCI…QAVH), and 838-861 (FVCK…QAEH). The disordered stretch occupies residues 915–935 (RRMQGSKSLGTEGNTEAGVSP). Over residues 919-928 (GSKSLGTEGN) the composition is skewed to polar residues. In terms of domain architecture, Pre-SET spans 1145-1221 (LRCSCRSSVC…TCQNRVLQNG (77 aa)). Residues Cys-1147, Cys-1149, Cys-1154, Cys-1159, Cys-1182, Cys-1203, Cys-1207, Cys-1209, and Cys-1213 each contribute to the Zn(2+) site. Positions 1224-1356 (AKLEVFRTES…AGEEITRDYG (133 aa)) constitute an SET domain. S-adenosyl-L-methionine contacts are provided by residues 1234-1236 (KGW), Tyr-1277, and 1313-1314 (NH). Position 1316 (Cys-1316) interacts with Zn(2+). Tyr-1355 provides a ligand contact to S-adenosyl-L-methionine. The Post-SET domain maps to 1366–1382 (NEHPCHCKATNCRGLLS). Zn(2+) contacts are provided by Cys-1370, Cys-1372, and Cys-1377.

The protein belongs to the class V-like SAM-binding methyltransferase superfamily. As to quaternary structure, component of a regulatory complex with LDL1/SWP1. Interacts with LDL1/SWP1.

The protein resides in the nucleus. It localises to the chromosome. It catalyses the reaction L-lysyl-[histone] + S-adenosyl-L-methionine = N(6)-methyl-L-lysyl-[histone] + S-adenosyl-L-homocysteine + H(+). Histone methyltransferase that functions together with its binding partner LDL1/SWP1 as one of the regulators of flower timing in Arabidopsis. Mediates H3K9me2 deposition and regulates gene expression in a DNA methylation-independent manner. Binds DNA through its zinc fingers and represses the expression of a subset of stimulus response genes. May represent a novel mechanism for plants to regulate their chromatin and transcriptional state, which may allow for the adaptability and modulation necessary to rapidly respond to environment or developmental cues. The chain is Histone-lysine N-methyltransferase SUVR5 from Arabidopsis thaliana (Mouse-ear cress).